Reading from the N-terminus, the 98-residue chain is Aspartyl/glutamyl-tRNA(Asn/Gln) amidotransferase subunit C (98 aa).

Positions 75–98 (AQALSGAPAQEQQRFKVPQILGED) are disordered.

The protein belongs to the GatC family. In terms of assembly, heterotrimer of A, B and C subunits.

The catalysed reaction is L-glutamyl-tRNA(Gln) + L-glutamine + ATP + H2O = L-glutaminyl-tRNA(Gln) + L-glutamate + ADP + phosphate + H(+). It carries out the reaction L-aspartyl-tRNA(Asn) + L-glutamine + ATP + H2O = L-asparaginyl-tRNA(Asn) + L-glutamate + ADP + phosphate + 2 H(+). Its function is as follows. Allows the formation of correctly charged Asn-tRNA(Asn) or Gln-tRNA(Gln) through the transamidation of misacylated Asp-tRNA(Asn) or Glu-tRNA(Gln) in organisms which lack either or both of asparaginyl-tRNA or glutaminyl-tRNA synthetases. The reaction takes place in the presence of glutamine and ATP through an activated phospho-Asp-tRNA(Asn) or phospho-Glu-tRNA(Gln). The protein is Aspartyl/glutamyl-tRNA(Asn/Gln) amidotransferase subunit C of Streptomyces griseus subsp. griseus (strain JCM 4626 / CBS 651.72 / NBRC 13350 / KCC S-0626 / ISP 5235).